A 201-amino-acid polypeptide reads, in one-letter code: 3-isopropylmalate dehydratase small subunit (201 aa).

This sequence belongs to the LeuD family. LeuD type 1 subfamily. Heterodimer of LeuC and LeuD.

It carries out the reaction (2R,3S)-3-isopropylmalate = (2S)-2-isopropylmalate. The protein operates within amino-acid biosynthesis; L-leucine biosynthesis; L-leucine from 3-methyl-2-oxobutanoate: step 2/4. Its function is as follows. Catalyzes the isomerization between 2-isopropylmalate and 3-isopropylmalate, via the formation of 2-isopropylmaleate. The protein is 3-isopropylmalate dehydratase small subunit of Shewanella woodyi (strain ATCC 51908 / MS32).